The primary structure comprises 79 residues: Tau-theraphotoxin-Hs1a (79 aa).

6 disulfide bridges follow: cysteine 2–cysteine 16, cysteine 9–cysteine 23, cysteine 15–cysteine 31, cysteine 44–cysteine 58, cysteine 51–cysteine 63, and cysteine 57–cysteine 71. Domain repeat units lie at residues 2–31 and 42–71; these read CAKE…IPHC and TNCA…IPYC. The segment at 2–71 is 2 X approximate repeats with cysteine pattern C-C-CC-C-C; the sequence is CAKEGEVCSW…DCPLAFIPYC (70 aa).

The protein belongs to the neurotoxin 23 family. Double-knot toxin subfamily. In terms of assembly, interacts with TRPV1 (2 toxins (4 moieties) bind 1 channel (homotetramer)). In terms of tissue distribution, expressed by the venom gland.

The protein resides in the secreted. Selectively activates the heat-activated TRPV1 channel. It binds to TRPV1 in an open state-dependent manner, trapping it there to produce irreversible currents. It binds to the outer edge of the external pore of TRPV1 in a counterclockwise configuration, using a limited protein-protein interface and inserting hydrophobic residues into the bilayer. It also partitions naturally into membranes, with the two lobes exhibiting opposing energetics for membrane partitioning (K1) and channel activation (K2). In addition, the toxin disrupts a cluster of hydrophobic residues behind the selectivity filter that are critical for channel activation. This is Tau-theraphotoxin-Hs1a from Cyriopagopus schmidti (Chinese bird spider).